The sequence spans 137 residues: uncharacterized protein (137 aa).

4 helical membrane-spanning segments follow: residues 14 to 34 (AVVVAILLYIFIILVVDGSIS), 48 to 68 (YHIIEFYDFIHIIGFLLSLSI), 84 to 104 (FFTIFFGITFILGITLFLGLT), and 109 to 129 (HIPSMRGYTTLMLFFFLLNLF).

It localises to the cell membrane. This is an uncharacterized protein from Methanocaldococcus jannaschii (strain ATCC 43067 / DSM 2661 / JAL-1 / JCM 10045 / NBRC 100440) (Methanococcus jannaschii).